We begin with the raw amino-acid sequence, 312 residues long: uncharacterized protein (312 aa).

Catalysis depends on charge relay system residues Ser200, Asp261, and His292.

It belongs to the AB hydrolase superfamily. AB hydrolase 2 family.

This is an uncharacterized protein from Acanthamoeba polyphaga mimivirus (APMV).